A 177-amino-acid polypeptide reads, in one-letter code: Adenine phosphoribosyltransferase (177 aa).

Belongs to the purine/pyrimidine phosphoribosyltransferase family. Homodimer.

Its subcellular location is the cytoplasm. It catalyses the reaction AMP + diphosphate = 5-phospho-alpha-D-ribose 1-diphosphate + adenine. Its pathway is purine metabolism; AMP biosynthesis via salvage pathway; AMP from adenine: step 1/1. Catalyzes a salvage reaction resulting in the formation of AMP, that is energically less costly than de novo synthesis. This is Adenine phosphoribosyltransferase from Chlorobaculum tepidum (strain ATCC 49652 / DSM 12025 / NBRC 103806 / TLS) (Chlorobium tepidum).